Consider the following 45-residue polypeptide: Large ribosomal subunit protein bL34 (45 aa).

This sequence belongs to the bacterial ribosomal protein bL34 family.

The sequence is that of Large ribosomal subunit protein bL34 (rpmH) from Streptomyces bikiniensis.